A 64-amino-acid polypeptide reads, in one-letter code: Small ribosomal subunit protein bS21 (64 aa).

It belongs to the bacterial ribosomal protein bS21 family.

The polypeptide is Small ribosomal subunit protein bS21 (Sulfurihydrogenibium sp. (strain YO3AOP1)).